A 612-amino-acid chain; its full sequence is GPI mannosyltransferase 3 (612 aa).

Helical transmembrane passes span 92–112 (LLAIASKEALSIICSIGAGLM) and 145–165 (VIYAPKLFMALLAATGEYFTI). The N-linked (GlcNAc...) asparagine glycan is linked to Asn-188. 3 helical membrane-spanning segments follow: residues 192 to 212 (IALLLTLTNFFNCFFITRTFI), 254 to 274 (RPSNAIIWIVLGFFLTINLLL), and 288 to 308 (ILVVFTITMLVNVVIDFYFYN). N-linked (GlcNAc...) asparagine glycosylation is present at Asn-321. Residues 339-359 (LLQSLPIMLGYSLPLFIYGLF) form a helical membrane-spanning segment. Asn-361 is a glycosylation site (N-linked (GlcNAc...) asparagine). Helical transmembrane passes span 371–391 (FGALRQIKFVLILNIIFYSYL), 398–418 (FIYPLQPLFCLLSALGALKLA), and 429–449 (EYVWIIPLMSMIVSIFITTFQ). 3 N-linked (GlcNAc...) asparagine glycosylation sites follow: Asn-508, Asn-526, and Asn-550.

It belongs to the glycosyltransferase 22 family. PIGB subfamily.

Its subcellular location is the endoplasmic reticulum membrane. The protein operates within glycolipid biosynthesis; glycosylphosphatidylinositol-anchor biosynthesis. Its function is as follows. Mannosyltransferase involved in glycosylphosphatidylinositol-anchor biosynthesis. Transfers the third mannose to Man2-GlcN-acyl-PI during GPI precursor assembly. The sequence is that of GPI mannosyltransferase 3 (GPI10) from Candida glabrata (strain ATCC 2001 / BCRC 20586 / JCM 3761 / NBRC 0622 / NRRL Y-65 / CBS 138) (Yeast).